Consider the following 105-residue polypeptide: Large ribosomal subunit protein uL24 (105 aa).

The protein belongs to the universal ribosomal protein uL24 family. As to quaternary structure, part of the 50S ribosomal subunit.

In terms of biological role, one of two assembly initiator proteins, it binds directly to the 5'-end of the 23S rRNA, where it nucleates assembly of the 50S subunit. Functionally, one of the proteins that surrounds the polypeptide exit tunnel on the outside of the subunit. This chain is Large ribosomal subunit protein uL24, found in Wolbachia pipientis wMel.